The following is a 215-amino-acid chain: Small ribosomal subunit protein eS1 (215 aa).

This sequence belongs to the eukaryotic ribosomal protein eS1 family.

The protein is Small ribosomal subunit protein eS1 of Thermoplasma volcanium (strain ATCC 51530 / DSM 4299 / JCM 9571 / NBRC 15438 / GSS1).